The sequence spans 145 residues: Small ribosomal subunit protein eS19 (145 aa).

At K23 the chain carries N6-acetyllysine. R67 carries the omega-N-methylarginine modification. N6-acetyllysine is present on residues K111 and K115. K143 carries the post-translational modification N6-succinyllysine.

Belongs to the eukaryotic ribosomal protein eS19 family. In terms of assembly, component of the small ribosomal subunit. Part of the small subunit (SSU) processome, composed of more than 70 proteins and the RNA chaperone small nucleolar RNA (snoRNA) U3. Interacts with RPS19BP1; the interaction is direct and mediates the integration of RPS19 in state post-A1. Interacts with RPS19BP1.

The protein localises to the cytoplasm. It is found in the nucleus. It localises to the nucleolus. Functionally, component of the small ribosomal subunit. The ribosome is a large ribonucleoprotein complex responsible for the synthesis of proteins in the cell. Required for pre-rRNA processing and maturation of 40S ribosomal subunits. Part of the small subunit (SSU) processome, first precursor of the small eukaryotic ribosomal subunit. During the assembly of the SSU processome in the nucleolus, many ribosome biogenesis factors, an RNA chaperone and ribosomal proteins associate with the nascent pre-rRNA and work in concert to generate RNA folding, modifications, rearrangements and cleavage as well as targeted degradation of pre-ribosomal RNA by the RNA exosome. This chain is Small ribosomal subunit protein eS19 (RPS19), found in Oryctolagus cuniculus (Rabbit).